Consider the following 273-residue polypeptide: Cysteine protease S273R (273 aa).

Catalysis depends on residues His-168 and Asn-187. Gln-226 lines the substrate pocket. Catalysis depends on Cys-232, which acts as the Nucleophile.

It belongs to the peptidase C63 family.

It is found in the host cytoplasm. The protein localises to the virion. Cysteine protease that plays several role during infection including processing of the structural polyprotein or inhibition of the host immune response. Catalyzes the maturation of the pp220 and pp62 polyprotein precursors into core-shell proteins. Plays a role in the disruption of host pyroptosis via specific cleavage of gasdermin D/GSDMD. In addition, strongly decreases the host cGAS-STING signaling by targeting IKBKE via its enzymatic activity. Also impairs host FOXJ1-mediated antiviral effect via degradation of FOXJ1. Cleaves host G3BP1 inducing loss of stress granules formation. Interacts with and induces the degradation of host STAT2 via polyubiquitination of the latter. This Ornithodoros (relapsing fever ticks) protein is Cysteine protease S273R.